The chain runs to 329 residues: Ethylene-responsive transcription factor ERF117 (329 aa).

Disordered regions lie at residues 25-51 (DATD…KPPK) and 71-90 (NSTG…FKGV). The segment covering 71-86 (NSTGNKAAGNRKTSSG) has biased composition (polar residues). Residues 86–143 (GFKGVRRRPWGKFAAEIRNPFEKKRKWLGTFPTEEEAAEAYQKSKREFDERLGLVKQE) constitute a DNA-binding region (AP2/ERF).

The protein belongs to the AP2/ERF transcription factor family. ERF subfamily.

The protein localises to the nucleus. Functionally, probably acts as a transcriptional activator. Binds to the GCC-box pathogenesis-related promoter element. May be involved in the regulation of gene expression by stress factors and by components of stress signal transduction pathways. The protein is Ethylene-responsive transcription factor ERF117 (ERF117) of Arabidopsis thaliana (Mouse-ear cress).